A 255-amino-acid chain; its full sequence is tRNA1(Val) (adenine(37)-N6)-methyltransferase (255 aa).

It belongs to the methyltransferase superfamily. tRNA (adenine-N(6)-)-methyltransferase family.

It localises to the cytoplasm. The enzyme catalyses adenosine(37) in tRNA1(Val) + S-adenosyl-L-methionine = N(6)-methyladenosine(37) in tRNA1(Val) + S-adenosyl-L-homocysteine + H(+). In terms of biological role, specifically methylates the adenine in position 37 of tRNA(1)(Val) (anticodon cmo5UAC). The sequence is that of tRNA1(Val) (adenine(37)-N6)-methyltransferase from Porphyromonas gingivalis (strain ATCC BAA-308 / W83).